The following is a 2894-amino-acid chain: Bifunctional DNA-directed RNA polymerase subunit beta-beta' (2894 aa).

A DNA-directed RNA polymerase subunit beta region spans residues 1 to 1378 (MANFTKLKNR…DVNIYGDEQD (1378 aa)). Residues 1385–2894 (PIAIKEDERP…QEEYEEDEEE (1510 aa)) are DNA-directed RNA polymerase subunit beta'. Zn(2+)-binding residues include Cys1450, Cys1452, Cys1465, and Cys1468. Asp1849, Asp1851, and Asp1853 together coordinate Mg(2+). Zn(2+) contacts are provided by Cys2179, Cys2253, Cys2260, and Cys2263.

This sequence in the N-terminal section; belongs to the RNA polymerase beta chain family. The protein in the C-terminal section; belongs to the RNA polymerase beta' chain family. In terms of assembly, the RNAP catalytic core consists of 2 alpha, 1 beta/beta' and 1 omega subunit. When a sigma factor is associated with the core the holoenzyme is formed, which can initiate transcription. It depends on Mg(2+) as a cofactor. The cofactor is Zn(2+).

It catalyses the reaction RNA(n) + a ribonucleoside 5'-triphosphate = RNA(n+1) + diphosphate. Its function is as follows. DNA-dependent RNA polymerase catalyzes the transcription of DNA into RNA using the four ribonucleoside triphosphates as substrates. The chain is Bifunctional DNA-directed RNA polymerase subunit beta-beta' (rpoBC) from Helicobacter hepaticus (strain ATCC 51449 / 3B1).